Reading from the N-terminus, the 309-residue chain is Probable manganese-dependent inorganic pyrophosphatase (309 aa).

Mn(2+) is bound by residues His-9, Asp-13, Asp-15, Asp-75, His-97, and Asp-149.

The protein belongs to the PPase class C family. The cofactor is Mn(2+).

It localises to the cytoplasm. It carries out the reaction diphosphate + H2O = 2 phosphate + H(+). This chain is Probable manganese-dependent inorganic pyrophosphatase, found in Staphylococcus haemolyticus (strain JCSC1435).